Consider the following 1335-residue polypeptide: Mediator of RNA polymerase II transcription subunit 15a (1335 aa).

Disordered stretches follow at residues 1 to 27 (MDNN…TQLP), 109 to 172 (GTSI…NNNT), 190 to 225 (QDSS…QQQP), 241 to 389 (FQSG…QHQQ), 401 to 448 (IQQQ…TQSN), 496 to 525 (LYSS…QQLG), 567 to 591 (SQRT…ANGG), and 683 to 815 (HRPR…QSNV). 3 stretches are compositionally biased toward polar residues: residues 110–158 (TSID…TALP), 190–207 (QDSS…SGPQ), and 241–257 (FQSG…PSHI). Positions 258–270 (QQQQQNVLQPNQL) are enriched in low complexity. The segment covering 271 to 299 (HSSQQPGVPTSATQPSTVNSAPLQGLHTN) has biased composition (polar residues). The span at 300 to 314 (QQSSPQLSSQQTTQS) shows a compositional bias: low complexity. Residues 315–328 (MLRQHQSSMLRQHP) are compositionally biased toward polar residues. The segment covering 329–362 (QSQQASGIHQQQSSLPQQSISPLQQQPTQLMRQQ) has biased composition (low complexity). Residues 363-374 (AANSSGIQQKQM) are compositionally biased toward polar residues. Over residues 401–436 (IQQQQSQQQPLQQPQQQQKQQPPAQQQLMSQQNSLQ) the composition is skewed to low complexity. Positions 437-448 (ATHQNPLGTQSN) are enriched in polar residues. The segment covering 498 to 525 (SSQGQQSQNQPSQQQMMPQLQSHHQQLG) has biased composition (low complexity). Residues 567–588 (SQRTLPEMPSSSLDSTAQTESA) show a composition bias toward polar residues. Residues 688 to 712 (PVQQGQLPQSQMQPMQQPQSQTVQD) are compositionally biased toward low complexity. 3 stretches are compositionally biased toward polar residues: residues 716–728 (DNQT…SMSM), 735–749 (AQQS…NVLS), and 756–815 (APQQ…QSNV). A coiled-coil region spans residues 834-882 (QDQQMQLKQQFQQRQMQQQQLQARQQQQQQQLQARQQAAQLQQMNDMND). Disordered regions lie at residues 947–986 (KMGT…SSSL) and 1146–1165 (FAGS…GKKA). The segment covering 957 to 973 (SPFVVPSPSSTPLAPSP) has biased composition (low complexity). A compositionally biased stretch (polar residues) spans 1148-1160 (GSETSDLESTATS).

Belongs to the plant Mediator complex subunit 15 family. Component of the Mediator complex.

It localises to the nucleus. Its function is as follows. Component of the Mediator complex, a coactivator involved in the regulated transcription of nearly all RNA polymerase II-dependent genes. Mediator functions as a bridge to convey information from gene-specific regulatory proteins to the basal RNA polymerase II transcription machinery. The Mediator complex, having a compact conformation in its free form, is recruited to promoters by direct interactions with regulatory proteins and serves for the assembly of a functional preinitiation complex with RNA polymerase II and the general transcription factors. This chain is Mediator of RNA polymerase II transcription subunit 15a (MED15A), found in Arabidopsis thaliana (Mouse-ear cress).